The chain runs to 467 residues: UDP-N-acetylmuramate--L-alanine ligase (467 aa).

123-129 (GTHGKST) is an ATP binding site.

Belongs to the MurCDEF family.

It localises to the cytoplasm. It catalyses the reaction UDP-N-acetyl-alpha-D-muramate + L-alanine + ATP = UDP-N-acetyl-alpha-D-muramoyl-L-alanine + ADP + phosphate + H(+). It participates in cell wall biogenesis; peptidoglycan biosynthesis. In terms of biological role, cell wall formation. This Arthrobacter sp. (strain FB24) protein is UDP-N-acetylmuramate--L-alanine ligase.